Reading from the N-terminus, the 284-residue chain is Acetylglutamate kinase (284 aa).

Substrate contacts are provided by residues 64-65, Arg-86, and Asn-179; that span reads GG.

Belongs to the acetylglutamate kinase family. ArgB subfamily.

It is found in the cytoplasm. The enzyme catalyses N-acetyl-L-glutamate + ATP = N-acetyl-L-glutamyl 5-phosphate + ADP. Its pathway is amino-acid biosynthesis; L-arginine biosynthesis; N(2)-acetyl-L-ornithine from L-glutamate: step 2/4. Functionally, catalyzes the ATP-dependent phosphorylation of N-acetyl-L-glutamate. This chain is Acetylglutamate kinase, found in Acaryochloris marina (strain MBIC 11017).